The following is an 82-amino-acid chain: Cytochrome b559 subunit alpha (82 aa).

Residues 21–35 (VIHSITIPALFIAGW) traverse the membrane as a helical segment. Histidine 23 serves as a coordination point for heme.

Belongs to the PsbE/PsbF family. Heterodimer of an alpha subunit and a beta subunit. PSII is composed of 1 copy each of membrane proteins PsbA, PsbB, PsbC, PsbD, PsbE, PsbF, PsbH, PsbI, PsbJ, PsbK, PsbL, PsbM, PsbT, PsbX, PsbY, PsbZ, Psb30/Ycf12, peripheral proteins PsbO, CyanoQ (PsbQ), PsbU, PsbV and a large number of cofactors. It forms dimeric complexes. Requires heme b as cofactor.

It is found in the cellular thylakoid membrane. Functionally, this b-type cytochrome is tightly associated with the reaction center of photosystem II (PSII). PSII is a light-driven water:plastoquinone oxidoreductase that uses light energy to abstract electrons from H(2)O, generating O(2) and a proton gradient subsequently used for ATP formation. It consists of a core antenna complex that captures photons, and an electron transfer chain that converts photonic excitation into a charge separation. The chain is Cytochrome b559 subunit alpha from Nostoc punctiforme (strain ATCC 29133 / PCC 73102).